A 96-amino-acid polypeptide reads, in one-letter code: Prokineticin Bm8-a (96 aa).

The N-terminal stretch at 1–19 (MKCFAQIVVLLLVIAFSHG) is a signal peptide. Intrachain disulfides connect C26-C38, C32-C50, C37-C78, C60-C86, and C80-C95.

This sequence belongs to the AVIT (prokineticin) family. Expressed by the skin glands.

It localises to the secreted. Its function is as follows. Potent agonist for both PKR1/PROKR1 and PKR2/PROKR2, and inducer of a potent and long-lasting hyperalgesia. Also potentiates capsaicin-induced TRPV1 current, when tested on DRG neurons. At subnanomolar concentrations, this protein both induces potent chemotaxis of macrophages and stimulates LPS-induced production of the pro-inflammatory cytokines IL-1 and IL-12. In vivo, potently stimulates the contraction of the guinea-pig gastrointestinal (GI) smooth muscle (nanomolar concentration). This is Prokineticin Bm8-a from Bombina maxima (Giant fire-bellied toad).